We begin with the raw amino-acid sequence, 493 residues long: Glycerol kinase (493 aa).

Residue threonine 13 participates in ADP binding. Threonine 13, threonine 14, and serine 15 together coordinate ATP. Threonine 13 is a sn-glycerol 3-phosphate binding site. ADP is bound at residue arginine 17. Sn-glycerol 3-phosphate contacts are provided by arginine 83, glutamate 84, tyrosine 135, and aspartate 244. Glycerol is bound by residues arginine 83, glutamate 84, tyrosine 135, aspartate 244, and glutamine 245. ADP is bound by residues threonine 266 and glycine 309. Residues threonine 266, glycine 309, glutamine 313, and glycine 410 each contribute to the ATP site. Positions 410 and 414 each coordinate ADP.

Belongs to the FGGY kinase family.

It catalyses the reaction glycerol + ATP = sn-glycerol 3-phosphate + ADP + H(+). Its pathway is polyol metabolism; glycerol degradation via glycerol kinase pathway; sn-glycerol 3-phosphate from glycerol: step 1/1. Inhibited by fructose 1,6-bisphosphate (FBP). Its function is as follows. Key enzyme in the regulation of glycerol uptake and metabolism. Catalyzes the phosphorylation of glycerol to yield sn-glycerol 3-phosphate. This Shewanella piezotolerans (strain WP3 / JCM 13877) protein is Glycerol kinase.